The sequence spans 172 residues: Large ribosomal subunit protein uL10 (172 aa).

This sequence belongs to the universal ribosomal protein uL10 family. In terms of assembly, part of the ribosomal stalk of the 50S ribosomal subunit. The N-terminus interacts with L11 and the large rRNA to form the base of the stalk. The C-terminus forms an elongated spine to which L12 dimers bind in a sequential fashion forming a multimeric L10(L12)X complex.

Functionally, forms part of the ribosomal stalk, playing a central role in the interaction of the ribosome with GTP-bound translation factors. This is Large ribosomal subunit protein uL10 from Brucella abortus (strain S19).